The primary structure comprises 316 residues: Olfactory receptor 51J1 (316 aa).

Residues 1–31 are Extracellular-facing; the sequence is MKISNNSLGFLPTTFILVGIPGLESEHLWIS. Residue asparagine 5 is glycosylated (N-linked (GlcNAc...) asparagine). Residues 32–52 form a helical membrane-spanning segment; that stretch reads VPFSLIYIIIFLGNGIILHVI. The Cytoplasmic portion of the chain corresponds to 53-63; that stretch reads RTDIALHQPMY. The chain crosses the membrane as a helical span at residues 64–84; it reads LFLAMLALAEVRVSASTLPTV. At 85–104 the chain is on the extracellular side; sequence LGIFLFGNTEISLEACLFPD. Cysteines 100 and 191 form a disulfide. A helical transmembrane segment spans residues 105–125; that stretch reads VLHPFFIHDGASCAAGHVFGP. Residues 126–161 lie on the Cytoplasmic side of the membrane; sequence LYSHLQPTELHSYPDTAQGLWHRSYYRTEKHYAHGS. The chain crosses the membrane as a helical span at residues 162–182; the sequence is VAHSLMASALLWPQCPLTFLL. Over 183–191 the chain is Extracellular; the sequence is SAPQSYLSC. The helical transmembrane segment at 192-212 threads the bilayer; it reads GNISVNNIYGIFIVTSTFGLD. Over 213 to 242 the chain is Cytoplasmic; it reads SLLIVISYGLILHTVLGIATGEGRKKALNT. A helical membrane pass occupies residues 243–263; it reads CGSHVCAVLAYYVPMIGLSIV. Over 264–275 the chain is Extracellular; the sequence is HRLGHRVSPLLQ. The helical transmembrane segment at 276-296 threads the bilayer; sequence AMMANAYLFFPPVVNPIVYSI. Topologically, residues 297-316 are cytoplasmic; it reads KTKEIHGAIVRMLLEKRRRV.

This sequence belongs to the G-protein coupled receptor 1 family.

It localises to the cell membrane. Odorant receptor. This Homo sapiens (Human) protein is Olfactory receptor 51J1 (OR51J1).